A 478-amino-acid polypeptide reads, in one-letter code: Alpha-1,3-mannosyl-glycoprotein 4-beta-N-acetylglucosaminyltransferase C (478 aa).

Topologically, residues 1–25 are cytoplasmic; it reads MLKFYQMKYIFQILDKMRCLRKRST. A helical; Signal-anchor for type II membrane protein membrane pass occupies residues 26 to 43; sequence VSFLGVLVVFLLFMNLYI. The Lumenal portion of the chain corresponds to 44 to 478; it reads EDSYVLEGDK…IIRSISIWTS (435 aa). N-linked (GlcNAc...) asparagine glycans are attached at residues Asn-84 and Asn-215.

Belongs to the glycosyltransferase 54 family. A divalent metal cation is required as a cofactor.

Its subcellular location is the golgi apparatus membrane. It catalyses the reaction N(4)-{beta-D-GlcNAc-(1-&gt;2)-alpha-D-Man-(1-&gt;3)-[beta-D-GlcNAc-(1-&gt;2)-alpha-D-Man-(1-&gt;6)]-beta-D-Man-(1-&gt;4)-beta-D-GlcNAc-(1-&gt;4)-beta-D-GlcNAc}-L-asparaginyl-[protein] + UDP-N-acetyl-alpha-D-glucosamine = N(4)-{beta-D-GlcNAc-(1-&gt;2)-[beta-D-GlcNAc-(1-&gt;4)]-alpha-D-Man-(1-&gt;3)-[beta-D-GlcNAc-(1-&gt;2)-alpha-D-Man-(1-&gt;6)]-beta-D-Man-(1-&gt;4)-beta-D-GlcNAc-(1-&gt;4)-beta-D-GlcNAc}-L-asparaginyl-[protein] + UDP + H(+). The protein operates within protein modification; protein glycosylation. In terms of biological role, glycosyltransferase that participates in the transfer of N-acetylglucosamine (GlcNAc) to the core mannose residues of N-linked glycans. Catalyzes the formation of the GlcNAcbeta1-4 branch on the GlcNAcbeta1-2Manalpha1-3 arm of the core structure of N-linked glycans. Essential for the production of tri- and tetra-antennary N-linked sugar chains. Does not catalyze the transfer of GlcNAc to the Manalpha1-6 arm to form GlcNAcBeta1-4Manalpha1-6 linkage ('GnT-VI' activity). This is Alpha-1,3-mannosyl-glycoprotein 4-beta-N-acetylglucosaminyltransferase C (Mgat4c) from Mus musculus (Mouse).